A 130-amino-acid chain; its full sequence is Transcription antitermination protein NusB (130 aa).

Belongs to the NusB family.

In terms of biological role, involved in transcription antitermination. Required for transcription of ribosomal RNA (rRNA) genes. Binds specifically to the boxA antiterminator sequence of the ribosomal RNA (rrn) operons. This chain is Transcription antitermination protein NusB, found in Bacillus anthracis (strain A0248).